The chain runs to 717 residues: Delta-like protein D (717 aa).

Residues 1–19 (MGRLMIAVLLCVMISQGFC) form the signal peptide. Over 20 to 547 (SGVFELKLQE…EEDDGGFPWT (528 aa)) the chain is Extracellular. In terms of domain architecture, DSL spans 175 to 219 (FVCDEHYYGEGCSVFCRPRDDTFGHFTCGERGEIICNSGWKGQYC). Intrachain disulfides connect Cys177-Cys186, Cys190-Cys202, Cys210-Cys219, Cys224-Cys235, Cys228-Cys241, Cys243-Cys252, Cys261-Cys266, Cys274-Cys283, Cys290-Cys302, Cys296-Cys312, Cys314-Cys323, Cys330-Cys341, Cys335-Cys350, Cys352-Cys361, Cys368-Cys379, Cys373-Cys389, Cys391-Cys400, Cys407-Cys418, Cys412-Cys427, Cys429-Cys438, Cys445-Cys456, Cys450-Cys465, Cys467-Cys476, Cys483-Cys494, Cys488-Cys503, and Cys505-Cys514. EGF-like domains are found at residues 220 to 253 (TEPICLPGCDEDHGFCDKPGECKCRVGFSGKYCD), 257 to 284 (RYPGCLHGTCQQPWQCNCQEGWGGLFCN), and 286 to 324 (DLNYCTHHKPCQNGATCTNTGQGSYTCSCRPGFTGDSCE). Residues 326–362 (EVNECSGSPCRNGGSCTDLENTYSCTCPPGFYGRNCE) form the EGF-like 4; calcium-binding domain. EGF-like domains lie at 364-401 (SAMTCADGPCFNGGHCADNPEGGYFCQCPMGYAGFNCE) and 403-439 (KIDHCSSNPCSNDAQCLDLVDSYLCQCPEGFTGTHCE). One can recognise an EGF-like 7; calcium-binding domain in the interval 441 to 477 (NIDECATYPCQNGGTCQDGLSDYTCTCPPGYTGKNCT). Residue Asn475 is glycosylated (N-linked (GlcNAc...) asparagine). An EGF-like 8 domain is found at 479-515 (AVNKCLHNPCHNGATCHEMDNRYVCACIPGYGGRNCQ). A helical membrane pass occupies residues 548–568 (AVCAGIILVLLVLIGGSVFVI). At 569-717 (YIRLKLQQRS…KDECIIATEV (149 aa)) the chain is on the cytoplasmic side. The segment at 649-693 (EDLGKEDSERSEATKCEPLDSDSEEKHRNHLKSDSSERKRTESLC) is disordered.

As to quaternary structure, interacts with mib. Ubiquitinated by mib, leading to its endocytosis and subsequent degradation. As to expression, expressed in both mesodermal and neuroectodermal regions. In the developing nervous system, it is expressed in overlapping regions with deltaB (dlb) and deltaA (dla); in the neural plate, dld is expressed in patches of contiguous cells with dla, while dlb is confined to scattered cells within those patches that will differentiate as neurons. In somites, it marks the anterior part of each formed somite, while deltaC (dlc) marks the posterior part. In 24 hours embryos, expressed in the hindbrain in stripes adjacent to rhombomere boundaries, but not in the actual boundary cells.

The protein resides in the membrane. Functionally, acts as a ligand for Notch receptors and is involved in primary neurogenesis and somitogenesis. Can activate Notch receptors, thereby playing a key role in lateral inhibition, a process that prevents the immediate neighbors of each nascent neural cell from simultaneously embarking on neural differentiation. Required in somite segmentation to keep the oscillations of neighboring presomitic mesoderm cells synchronized. The chain is Delta-like protein D (dld) from Danio rerio (Zebrafish).